We begin with the raw amino-acid sequence, 193 residues long: dTTP/UTP pyrophosphatase (193 aa).

The active-site Proton acceptor is Asp77.

It belongs to the Maf family. YhdE subfamily. A divalent metal cation is required as a cofactor.

It is found in the cytoplasm. It catalyses the reaction dTTP + H2O = dTMP + diphosphate + H(+). The enzyme catalyses UTP + H2O = UMP + diphosphate + H(+). Nucleoside triphosphate pyrophosphatase that hydrolyzes dTTP and UTP. May have a dual role in cell division arrest and in preventing the incorporation of modified nucleotides into cellular nucleic acids. This chain is dTTP/UTP pyrophosphatase, found in Phocaeicola vulgatus (strain ATCC 8482 / DSM 1447 / JCM 5826 / CCUG 4940 / NBRC 14291 / NCTC 11154) (Bacteroides vulgatus).